Here is a 330-residue protein sequence, read N- to C-terminus: Serpentine receptor class J-38 (330 aa).

Transmembrane regions (helical) follow at residues 6 to 26, 43 to 63, 98 to 118, 135 to 155, 200 to 220, 253 to 273, and 285 to 305; these read IYIF…PIFV, LLLF…VVPI, LVAS…LVIY, LLLS…LGYA, TIIW…LALL, IPIV…IFGI, and GALG…LPIF.

Belongs to the nematode receptor-like protein srj family.

It is found in the membrane. This is Serpentine receptor class J-38 (srj-38) from Caenorhabditis elegans.